Reading from the N-terminus, the 220-residue chain is UPF0758 protein ASA_4229 (220 aa).

An MPN domain is found at 95-220 (EQLQRGDALT…TVSFAERGWL (126 aa)). Zn(2+) contacts are provided by H169, H171, and D182. Positions 169–182 (HNHPSGVAEPSRAD) match the JAMM motif motif.

It belongs to the UPF0758 family.

This Aeromonas salmonicida (strain A449) protein is UPF0758 protein ASA_4229.